Consider the following 272-residue polypeptide: NADPH-dependent 7-cyano-7-deazaguanine reductase (272 aa).

82–84 (IES) serves as a coordination point for substrate. An NADPH-binding site is contributed by 84–85 (SK). C178 (thioimide intermediate) is an active-site residue. The active-site Proton donor is D185. Substrate is bound at residue 217 to 218 (HE). Residue 246–247 (RG) coordinates NADPH.

The protein belongs to the GTP cyclohydrolase I family. QueF type 2 subfamily. As to quaternary structure, homodimer.

It is found in the cytoplasm. The enzyme catalyses 7-aminomethyl-7-carbaguanine + 2 NADP(+) = 7-cyano-7-deazaguanine + 2 NADPH + 3 H(+). It functions in the pathway tRNA modification; tRNA-queuosine biosynthesis. Catalyzes the NADPH-dependent reduction of 7-cyano-7-deazaguanine (preQ0) to 7-aminomethyl-7-deazaguanine (preQ1). The sequence is that of NADPH-dependent 7-cyano-7-deazaguanine reductase from Stenotrophomonas maltophilia (strain K279a).